The primary structure comprises 552 residues: HTH-type transcriptional regulator SgrR (552 aa).

Residues 1-116 (MPSARLQQQF…LVSHLGRSFR (116 aa)) enclose the HTH marR-type domain. The segment at residues 26–49 (LNELAALLSCSRRHMRTLLNTMQD) is a DNA-binding region (H-T-H motif). Positions 163 to 492 (ELEADIAHHW…IDWQVDAARW (330 aa)) are solute-binding.

Functionally, activates the small RNA gene sgrS under glucose-phosphate stress conditions as well as yfdZ. Represses its own transcription under both stress and non-stress conditions. Might act as a sensor of the intracellular accumulation of phosphoglucose by binding these molecules in its C-terminal solute-binding domain. This chain is HTH-type transcriptional regulator SgrR, found in Escherichia coli O157:H7.